Consider the following 446-residue polypeptide: MADYLTVTHLTKYLKLKFDRDPYLERVYLTGQVSNFRKRPTHQYFSLKDESAVIQATMWAGVYKKLGFDLEEGMKINVIGRVQLYEPSGSYSIVIEKAEPDGIGALALQFEQLKKKLTAEGYFEQKHKQPLPQFVSKIGVITSPSGAVIRDIITTVSRRFPGVEILLFPTKVQGDGAAQEVVANIRRANQREDLDLLIVGRGGGSIEDLWAFNEEIVVQAIFESQLPVISSVGHETDTTLADFVADRRAATPTAAAELATPITKTDLMSWIVERQNRSYQACLRRIKQRQEWVDKLSQSVIFRQPERLYDAYLQKIDRLSMTLMNTMKDRLSSAKENKVQLDHALANSQLQTKIERYQDRVATAKRLLMANMARQYDSQLARFEKAQDALLSLDVSRIIARGYAMIEKNQALVASVSQITKGDQLTIKMRDGQLDVEVKDVKNENI.

Belongs to the XseA family. Heterooligomer composed of large and small subunits.

It localises to the cytoplasm. The catalysed reaction is Exonucleolytic cleavage in either 5'- to 3'- or 3'- to 5'-direction to yield nucleoside 5'-phosphates.. Bidirectionally degrades single-stranded DNA into large acid-insoluble oligonucleotides, which are then degraded further into small acid-soluble oligonucleotides. The polypeptide is Exodeoxyribonuclease 7 large subunit (Streptococcus pyogenes serotype M6 (strain ATCC BAA-946 / MGAS10394)).